A 102-amino-acid chain; its full sequence is Small ribosomal subunit protein uS10 (102 aa).

It belongs to the universal ribosomal protein uS10 family. As to quaternary structure, part of the 30S ribosomal subunit.

Involved in the binding of tRNA to the ribosomes. In Exiguobacterium sibiricum (strain DSM 17290 / CCUG 55495 / CIP 109462 / JCM 13490 / 255-15), this protein is Small ribosomal subunit protein uS10.